The primary structure comprises 360 residues: Methyltransferase pvhD (360 aa).

S-adenosyl-L-methionine contacts are provided by residues 201-202 (SG), Asp227, 251-252 (DL), Arg267, and Arg268.

Belongs to the class I-like SAM-binding methyltransferase superfamily. Cation-independent O-methyltransferase family.

It participates in secondary metabolite biosynthesis. Functionally, methyltransferase; part of the gene cluster that mediates the biosynthesis of varicidin A, an antifungal natural product containing a cis-octahydrodecalin core. The PKS module of pvhA together with the enoylreductase pvhC catalyze the formation of the polyketide unit which is then conjugated to L-isoleucine by the condensation domain of the NRPS module. Activity of the Dieckmann cyclase domain (RED) of pvhA results in release of an acyclic tetramate. The cytochrome P450 monooxygenase pvhE then catalyzes the oxidation of the C21 methyl group to a to carboxylate group. The methyltransferase pvhD then further methylates the pvhE product. The Diels-Alderase pvhB is able to catalyze Diels-Alder cycloaddition using both pvhE and pvhD products as substrates to form the decalin ring, yielding varicidin B and A, respectively. The protein is Methyltransferase pvhD of Talaromyces variabilis (Penicillium variabile).